The primary structure comprises 397 residues: RNA binding protein fox-1 homolog 1 (397 aa).

Residues 1-121 are disordered; it reads MNCEREQLRG…NKSQPKRLHV (121 aa). The segment covering 70 to 87 has biased composition (polar residues); sequence QTHSEQSPADTSAQTVSG. Low complexity predominate over residues 88-99; sequence TATQTDDAAPTD. Residues 100-113 show a composition bias toward polar residues; the sequence is GQPQTQPSENTENK. Residues 117–193 form the RRM domain; the sequence is KRLHVSNIPF…RKIEVNNATA (77 aa). The residue at position 317 (R317) is an Asymmetric dimethylarginine. R388 is subject to Omega-N-methylarginine.

As to quaternary structure, binds to the C-terminus of ATXN2. Predominantly expressed in muscle and brain.

It localises to the nucleus. The protein localises to the cytoplasm. Functionally, RNA-binding protein that regulates alternative splicing events by binding to 5'-UGCAUGU-3' elements. Regulates alternative splicing of tissue-specific exons and of differentially spliced exons during erythropoiesis. The polypeptide is RNA binding protein fox-1 homolog 1 (RBFOX1) (Homo sapiens (Human)).